A 295-amino-acid chain; its full sequence is Diaminopimelate epimerase (295 aa).

Substrate is bound by residues N13 and N69. Residue C78 is the Proton donor of the active site. Substrate contacts are provided by residues 79-80 (GN), N173, N212, and 230-231 (ER). Residue C239 is the Proton acceptor of the active site. Substrate is bound at residue 240 to 241 (GT).

Belongs to the diaminopimelate epimerase family. In terms of assembly, homodimer.

The protein resides in the cytoplasm. It catalyses the reaction (2S,6S)-2,6-diaminopimelate = meso-2,6-diaminopimelate. The protein operates within amino-acid biosynthesis; L-lysine biosynthesis via DAP pathway; DL-2,6-diaminopimelate from LL-2,6-diaminopimelate: step 1/1. Functionally, catalyzes the stereoinversion of LL-2,6-diaminopimelate (L,L-DAP) to meso-diaminopimelate (meso-DAP), a precursor of L-lysine. The sequence is that of Diaminopimelate epimerase from Methanococcus aeolicus (strain ATCC BAA-1280 / DSM 17508 / OCM 812 / Nankai-3).